A 481-amino-acid chain; its full sequence is Hyaluronidase-4 (481 aa).

At 1-8 (MKVLSEGQ) the chain is on the cytoplasmic side. Residues 9-29 (LKLCVVQPVHLTSWLLIFFIL) form a helical membrane-spanning segment. The Extracellular segment spans residues 30 to 453 (KSISCLKPAR…ADCREIKTAD (424 aa)). 5 disulfides stabilise this stretch: C59-C351, C223-C237, C376-C387, C381-C435, and C437-C446. 2 N-linked (GlcNAc...) asparagine glycosylation sites follow: N86 and N115. E147 functions as the Proton donor in the catalytic mechanism. N177 carries an N-linked (GlcNAc...) (complex) asparagine glycan. N343 carries N-linked (GlcNAc...) asparagine glycosylation. Residues 454–474 (GCSGVSPSPGSLMTLCLLLLA) form a helical membrane-spanning segment. Residues 475 to 481 (SYRSIQL) are Cytoplasmic-facing.

The protein belongs to the glycosyl hydrolase 56 family. In terms of tissue distribution, detected in placenta and skeletal muscle.

It is found in the membrane. The enzyme catalyses Random hydrolysis of (1-&gt;4)-linkages between N-acetyl-beta-D-glucosamine and D-glucuronate residues in hyaluronate.. Functionally, endo-hyaluronidase that degrades hyaluronan to smaller oligosaccharide fragments. Also has chondroitin sulfate hydrolase activity, The best substrate being the galactosaminidic linkage in the sequence of a trisulfated tetrasaccharide. This Homo sapiens (Human) protein is Hyaluronidase-4 (HYAL4).